The following is a 274-amino-acid chain: Chemotaxis protein methyltransferase 1 (274 aa).

Positions 1 to 274 (MSAANADFEL…CSPGIIYRAK (274 aa)) constitute a CheR-type methyltransferase domain. Residues Asn72, Thr74, Arg78, Glu115, Asp144, 200 to 201 (NL), and 217 to 218 (RN) contribute to the S-adenosyl-L-methionine site.

It catalyses the reaction L-glutamyl-[protein] + S-adenosyl-L-methionine = [protein]-L-glutamate 5-O-methyl ester + S-adenosyl-L-homocysteine. Methylation of the membrane-bound methyl-accepting chemotaxis proteins (MCP) to form gamma-glutamyl methyl ester residues in MCP. The sequence is that of Chemotaxis protein methyltransferase 1 (cheR1) from Pseudomonas aeruginosa (strain ATCC 15692 / DSM 22644 / CIP 104116 / JCM 14847 / LMG 12228 / 1C / PRS 101 / PAO1).